Here is a 442-residue protein sequence, read N- to C-terminus: UPF0489 protein C5orf22 homolog (442 aa).

Residues 175–208 (SSAKKPKLALEDSRNTASTNCDSSSEGLEKDTAT) are disordered. Residues 189-200 (NTASTNCDSSSE) are compositionally biased toward polar residues.

Belongs to the UPF0489 family.

This chain is UPF0489 protein C5orf22 homolog, found in Pongo abelii (Sumatran orangutan).